Consider the following 75-residue polypeptide: DNA-directed RNA polymerase subunit omega (75 aa).

The protein belongs to the RNA polymerase subunit omega family. In cyanobacteria the RNAP catalytic core is composed of 2 alpha, 1 beta, 1 beta', 1 gamma and 1 omega subunit. When a sigma factor is associated with the core the holoenzyme is formed, which can initiate transcription.

It catalyses the reaction RNA(n) + a ribonucleoside 5'-triphosphate = RNA(n+1) + diphosphate. In terms of biological role, promotes RNA polymerase assembly. Latches the N- and C-terminal regions of the beta' subunit thereby facilitating its interaction with the beta and alpha subunits. This is DNA-directed RNA polymerase subunit omega from Prochlorococcus marinus (strain MIT 9211).